Here is a 246-residue protein sequence, read N- to C-terminus: Ribonuclease PH (246 aa).

Residues Arg-91 and 129 to 131 (GTR) contribute to the phosphate site.

The protein belongs to the RNase PH family. In terms of assembly, homohexameric ring arranged as a trimer of dimers.

The catalysed reaction is tRNA(n+1) + phosphate = tRNA(n) + a ribonucleoside 5'-diphosphate. Functionally, phosphorolytic 3'-5' exoribonuclease that plays an important role in tRNA 3'-end maturation. Removes nucleotide residues following the 3'-CCA terminus of tRNAs; can also add nucleotides to the ends of RNA molecules by using nucleoside diphosphates as substrates, but this may not be physiologically important. Probably plays a role in initiation of 16S rRNA degradation (leading to ribosome degradation) during starvation. This chain is Ribonuclease PH, found in Paraburkholderia phymatum (strain DSM 17167 / CIP 108236 / LMG 21445 / STM815) (Burkholderia phymatum).